The sequence spans 953 residues: Isoleucine--tRNA ligase (953 aa).

The short motif at P61 to H71 is the 'HIGH' region element. L-isoleucyl-5'-AMP is bound at residue E564. The 'KMSKS' region signature appears at K605–S609. K608 provides a ligand contact to ATP. 4 residues coordinate Zn(2+): C922, C925, C942, and C945.

Belongs to the class-I aminoacyl-tRNA synthetase family. IleS type 1 subfamily. Monomer. Zn(2+) serves as cofactor.

The protein localises to the cytoplasm. The enzyme catalyses tRNA(Ile) + L-isoleucine + ATP = L-isoleucyl-tRNA(Ile) + AMP + diphosphate. Catalyzes the attachment of isoleucine to tRNA(Ile). As IleRS can inadvertently accommodate and process structurally similar amino acids such as valine, to avoid such errors it has two additional distinct tRNA(Ile)-dependent editing activities. One activity is designated as 'pretransfer' editing and involves the hydrolysis of activated Val-AMP. The other activity is designated 'posttransfer' editing and involves deacylation of mischarged Val-tRNA(Ile). The polypeptide is Isoleucine--tRNA ligase (Thermosynechococcus vestitus (strain NIES-2133 / IAM M-273 / BP-1)).